A 43-amino-acid polypeptide reads, in one-letter code: Defensin (43 aa).

3 disulfides stabilise this stretch: Cys-3–Cys-34, Cys-20–Cys-39, and Cys-24–Cys-41.

The protein localises to the secreted. Antibacterial peptide active against Gram-positive and Gram-negative bacteria. The chain is Defensin from Palomena prasina (Green shield bug).